The following is a 676-amino-acid chain: DNA ligase (676 aa).

Residues 34–38 (DQEFD), 83–84 (SL), and E117 contribute to the NAD(+) site. K119 serves as the catalytic N6-AMP-lysine intermediate. Residues R140, E177, K285, and K309 each contribute to the NAD(+) site. Positions 403, 406, 427, and 434 each coordinate Zn(2+). The BRCT domain maps to 595–676 (NNNGLLKNKT…EWLKMLNKSG (82 aa)).

This sequence belongs to the NAD-dependent DNA ligase family. LigA subfamily. The cofactor is Mg(2+). Requires Mn(2+) as cofactor.

The catalysed reaction is NAD(+) + (deoxyribonucleotide)n-3'-hydroxyl + 5'-phospho-(deoxyribonucleotide)m = (deoxyribonucleotide)n+m + AMP + beta-nicotinamide D-nucleotide.. Its function is as follows. DNA ligase that catalyzes the formation of phosphodiester linkages between 5'-phosphoryl and 3'-hydroxyl groups in double-stranded DNA using NAD as a coenzyme and as the energy source for the reaction. It is essential for DNA replication and repair of damaged DNA. This chain is DNA ligase, found in Pelagibacter ubique (strain HTCC1062).